Reading from the N-terminus, the 388-residue chain is MPEFKLADRLATLPPYLFAEIDRLKAEVAAQGVDIISLGIGDPDLPTPDFIIEALHKAAKNPVNHQYPSYVGLLTFRQAVADWYKERFDVELDATKEVVSLIGSKEGIAHFPLAFVNPGDLVLVASPNYPVYPVASGFAGGEVEIVPLLEENDFLPNLDAISDEKWDKCKIFFVNYPNNPTSATATPEFYAELVAKAKKHNVIIAADAAYTEVYYDEDKKPISILETPGAKDVAIEFHSLSKTYNMTGWRCGMAVGNASLVAGLGKIKENVDSGIFQAVQEAGIVALKEGEPYVKEFRKIYKERRDCVIEALEKINISCKVPDASIFVWAKTPEGYTSSEFVSKLLKETGVVVTPGNGFGESGEGYFRISLTVDTDRLKEAVSRISKL.

Substrate-binding residues include tyrosine 16 and glycine 41. Pyridoxal 5'-phosphate contacts are provided by residues tyrosine 70, 104-105 (SK), tyrosine 129, asparagine 179, tyrosine 210, and 239-241 (SLS). Substrate-binding residues include lysine 105, tyrosine 129, and asparagine 179. Lysine 242 carries the N6-(pyridoxal phosphate)lysine modification. A pyridoxal 5'-phosphate-binding site is contributed by arginine 250. Arginine 368 provides a ligand contact to substrate.

Belongs to the class-I pyridoxal-phosphate-dependent aminotransferase family. LL-diaminopimelate aminotransferase subfamily. As to quaternary structure, homodimer. Pyridoxal 5'-phosphate serves as cofactor.

It carries out the reaction (2S,6S)-2,6-diaminopimelate + 2-oxoglutarate = (S)-2,3,4,5-tetrahydrodipicolinate + L-glutamate + H2O + H(+). It participates in amino-acid biosynthesis; L-lysine biosynthesis via DAP pathway; LL-2,6-diaminopimelate from (S)-tetrahydrodipicolinate (aminotransferase route): step 1/1. Its function is as follows. Involved in the synthesis of meso-diaminopimelate (m-DAP or DL-DAP), required for both lysine and peptidoglycan biosynthesis. Catalyzes the direct conversion of tetrahydrodipicolinate to LL-diaminopimelate. This chain is LL-diaminopimelate aminotransferase, found in Maridesulfovibrio salexigens (strain ATCC 14822 / DSM 2638 / NCIMB 8403 / VKM B-1763) (Desulfovibrio salexigens).